Here is a 123-residue protein sequence, read N- to C-terminus: Protein Wnt-7 (123 aa).

Ser-1 carries the O-palmitoleoyl serine; by PORCN lipid modification. Cys-89 and Cys-104 form a disulfide bridge. Asn-90 is a glycosylation site (N-linked (GlcNAc...) asparagine).

This sequence belongs to the Wnt family. In terms of processing, palmitoleoylation is required for efficient binding to frizzled receptors. Depalmitoleoylation leads to Wnt signaling pathway inhibition.

The protein resides in the secreted. It localises to the extracellular space. Its subcellular location is the extracellular matrix. In terms of biological role, ligand for members of the frizzled family of seven transmembrane receptors. Probable developmental protein. May be a signaling molecule which affects the development of discrete regions of tissues. Is likely to signal over only few cell diameters. The polypeptide is Protein Wnt-7 (WNT-7) (Evasterias troschelii (Mottled sea star)).